Consider the following 273-residue polypeptide: Glutamate racemase (273 aa).

Substrate-binding positions include 9–10 and 41–42; these read DS and YG. The active-site Proton donor/acceptor is Cys73. 74 to 75 contributes to the substrate binding site; that stretch reads NT. The Proton donor/acceptor role is filled by Cys183. Position 184 to 185 (184 to 185) interacts with substrate; the sequence is TH.

It belongs to the aspartate/glutamate racemases family.

It carries out the reaction L-glutamate = D-glutamate. It participates in cell wall biogenesis; peptidoglycan biosynthesis. Its function is as follows. Provides the (R)-glutamate required for cell wall biosynthesis. The protein is Glutamate racemase of Shewanella sp. (strain ANA-3).